We begin with the raw amino-acid sequence, 614 residues long: Zinc finger protein ztf-7 (614 aa).

Residues 1–10 (MSTSGSGGGN) are compositionally biased toward gly residues. The tract at residues 1–160 (MSTSGSGGGN…SRPKKPEKMS (160 aa)) is disordered. The segment covering 18 to 41 (NVASSPNANPKKNADTESSGGSKN) has biased composition (polar residues). Positions 54–69 (GSNSRNGSRTNSVSNS) are enriched in low complexity. Positions 74-83 (NRKDWTDRKS) are enriched in basic and acidic residues. The segment covering 132-150 (DYSDEYELDEPFSDSDDED) has biased composition (acidic residues). C2H2-type zinc fingers lie at residues 356 to 380 (NECI…KRNH) and 447 to 470 (VVCL…KTTH).

The protein belongs to the ZNF277 family. As to quaternary structure, interacts with rps-2.

Its subcellular location is the cytoplasm. Its function is as follows. Probable transcription factor. Limits the ability to tolerate cold environment or cold-warm stress. In complex with rps-2, mediates the cold-warm shock response by promoting translocation of components of the RNA exosome from the nucleolus to nucleoplasm. In Caenorhabditis elegans, this protein is Zinc finger protein ztf-7.